We begin with the raw amino-acid sequence, 132 residues long: Small ribosomal subunit protein uS8 (132 aa).

It belongs to the universal ribosomal protein uS8 family. Part of the 30S ribosomal subunit. Contacts proteins S5 and S12.

Functionally, one of the primary rRNA binding proteins, it binds directly to 16S rRNA central domain where it helps coordinate assembly of the platform of the 30S subunit. The sequence is that of Small ribosomal subunit protein uS8 from Gluconobacter oxydans (strain 621H) (Gluconobacter suboxydans).